We begin with the raw amino-acid sequence, 201 residues long: MIILGLTGGIGSGKSLVASYFNRFVKAVVFDADNVVNNLYNFDNNVIELVKSYFPTSVNNGVVDKNDLKHYFLLYDDLWIKFQSELHSIVWKIQKDFILSNSRRVTKYVVLDVPLLIEANYHNCCDFVIHVKANSILQRQRLLKRGMSRHEFELISRLQLSDNDRKRLSDFTIRTGLSKNFVVSQVKDIVFQIDSRVGCKI.

In terms of domain architecture, DPCK spans isoleucine 3–isoleucine 201. ATP is bound at residue glycine 11–leucine 16.

Belongs to the CoaE family.

The protein resides in the cytoplasm. The enzyme catalyses 3'-dephospho-CoA + ATP = ADP + CoA + H(+). It functions in the pathway cofactor biosynthesis; coenzyme A biosynthesis; CoA from (R)-pantothenate: step 5/5. Functionally, catalyzes the phosphorylation of the 3'-hydroxyl group of dephosphocoenzyme A to form coenzyme A. The sequence is that of Dephospho-CoA kinase from Ehrlichia ruminantium (strain Welgevonden).